Here is a 312-residue protein sequence, read N- to C-terminus: MRLAGIPNLAVSASTPLSLYTRFGIGGPADLFAETRDEGAFMAAIAAARESGTAVMVTGGGTNLIVSDAGFRGLVVRFADDTLSAEAERVTAGAGAVLQDLIDFANHRGLKGLETLAGIPGWVGAAVYGNAGAYGHSISERVRAVRFFDGSAVRIFDHAQCEFAYRESIFKRHKDWIIFSAELVMDAGEAGELERTSADILKVRNEKFPPTMKCAGSIFKNFLITELPPPVAGLVPANVVREGKVPAAWFLEQVGAKGMRFGGIRVADYHANLIYNAGEGTARELCAVIAELKGRVRERFGIEVEEEVQYVG.

The FAD-binding PCMH-type domain maps to 24 to 206; sequence GIGGPADLFA…SADILKVRNE (183 aa). The active site involves Arg-166. Catalysis depends on Ser-217, which acts as the Proton donor. Glu-307 is an active-site residue.

The protein belongs to the MurB family. The cofactor is FAD.

The protein localises to the cytoplasm. The catalysed reaction is UDP-N-acetyl-alpha-D-muramate + NADP(+) = UDP-N-acetyl-3-O-(1-carboxyvinyl)-alpha-D-glucosamine + NADPH + H(+). Its pathway is cell wall biogenesis; peptidoglycan biosynthesis. Cell wall formation. This is UDP-N-acetylenolpyruvoylglucosamine reductase from Solibacter usitatus (strain Ellin6076).